The chain runs to 332 residues: UPF0194 membrane protein YbhG (332 aa).

The N-terminal stretch at 1–16 (MMKKPVVIGLAVVVLA) is a signal peptide. Positions 141–210 (RTISANDLEN…NLQDSTLIAP (70 aa)) form a coiled coil.

This sequence belongs to the UPF0194 family.

Its subcellular location is the periplasm. This is UPF0194 membrane protein YbhG (ybhG) from Shigella flexneri.